The following is a 465-amino-acid chain: MSTGKIIQVIGAVVDVEFPQETVPNIYSALIVTAKNLTMEVQQQIGGGVVRCIAMGASDGLSRGLDVTDTGKPITVPVGTATLGRIMNVLGEPIDMCGEIGATEHYGIHREAPTYEEQSASVATLEVGIKVIDLICPFSKGGKIGLFGGAGVGKTVNMMELINNIALKHSGLSVFAGVGERTREGNDFYFEMQEAGVVNVEKPELSKVAMVYGQMNEPPGNRLRVALTGLTMAERFRDEGKDVLLFIDNIYRYTLAGTEVSALLGRMPSAVGYQPTLAEEMGVLQERITSTKTGSITSIQAVYVPADDLTDPAPATTFAHLDATVVLNRSIASMGLYPAIDPLDSTSRQLDPLVVGQEHYDIARGVQGTLQRYKELKDIIAILGMDELSEDDKLVVSRARKIGNFLTQAYHVAEVFTGDPGMYVPLKDTLAGFKGLLAGDYDDLPEQAFLYIGAIEEAVEKAKKM.

Position 148-155 (148-155) interacts with ATP; sequence GGAGVGKT.

This sequence belongs to the ATPase alpha/beta chains family. In terms of assembly, F-type ATPases have 2 components, CF(1) - the catalytic core - and CF(0) - the membrane proton channel. CF(1) has five subunits: alpha(3), beta(3), gamma(1), delta(1), epsilon(1). CF(0) has three main subunits: a(1), b(2) and c(9-12). The alpha and beta chains form an alternating ring which encloses part of the gamma chain. CF(1) is attached to CF(0) by a central stalk formed by the gamma and epsilon chains, while a peripheral stalk is formed by the delta and b chains.

It is found in the cell inner membrane. The enzyme catalyses ATP + H2O + 4 H(+)(in) = ADP + phosphate + 5 H(+)(out). Its function is as follows. Produces ATP from ADP in the presence of a proton gradient across the membrane. The catalytic sites are hosted primarily by the beta subunits. This Psychromonas ingrahamii (strain DSM 17664 / CCUG 51855 / 37) protein is ATP synthase subunit beta 2.